The following is a 207-amino-acid chain: MTDTPTKQEITSKNDKVPGAIPGEQKKNNRNNDRKRNRRGDSKNLERDSDWQERVVQIRRVSKTVKGGKKMSFRAIVVVGNEKGQVGVGVGKAGDVIGAVRKGVSDGKKNLVRVPLTPNNSIPTLSKGRDGAANVLIRPAAPGTGVIAGGSIRTVLELAGIKNVLAKRLGSKTPLNNARAAMVALSQLRTHKSASRERGISLEQLYS.

The disordered stretch occupies residues 1–51 (MTDTPTKQEITSKNDKVPGAIPGEQKKNNRNNDRKRNRRGDSKNLERDSDW). Basic and acidic residues predominate over residues 24 to 51 (EQKKNNRNNDRKRNRRGDSKNLERDSDW). The 64-residue stretch at 51-114 (WQERVVQIRR…SDGKKNLVRV (64 aa)) folds into the S5 DRBM domain.

The protein belongs to the universal ribosomal protein uS5 family. Part of the 30S ribosomal subunit. Contacts proteins S4 and S8.

In terms of biological role, with S4 and S12 plays an important role in translational accuracy. Located at the back of the 30S subunit body where it stabilizes the conformation of the head with respect to the body. This Prochlorococcus marinus (strain MIT 9312) protein is Small ribosomal subunit protein uS5.